We begin with the raw amino-acid sequence, 377 residues long: Nitric oxide reductase FlRd-NAD(+) reductase (377 aa).

The protein belongs to the FAD-dependent oxidoreductase family. The cofactor is FAD.

It localises to the cytoplasm. It catalyses the reaction 2 reduced [nitric oxide reductase rubredoxin domain] + NAD(+) + H(+) = 2 oxidized [nitric oxide reductase rubredoxin domain] + NADH. It participates in nitrogen metabolism; nitric oxide reduction. Its function is as follows. One of at least two accessory proteins for anaerobic nitric oxide (NO) reductase. Reduces the rubredoxin moiety of NO reductase. This chain is Nitric oxide reductase FlRd-NAD(+) reductase, found in Escherichia coli O17:K52:H18 (strain UMN026 / ExPEC).